Consider the following 332-residue polypeptide: Anthranilate phosphoribosyltransferase (332 aa).

5-phospho-alpha-D-ribose 1-diphosphate is bound by residues Gly79, 82–83, Ser87, 89–92, 107–115, and Ser119; these read GD, NIST, and KHGNRSVSS. Gly79 is a binding site for anthranilate. Residue Ser91 coordinates Mg(2+). Asn110 contributes to the anthranilate binding site. Residue Arg165 coordinates anthranilate. Residues Asp223 and Glu224 each coordinate Mg(2+).

This sequence belongs to the anthranilate phosphoribosyltransferase family. Homodimer. Mg(2+) serves as cofactor.

It catalyses the reaction N-(5-phospho-beta-D-ribosyl)anthranilate + diphosphate = 5-phospho-alpha-D-ribose 1-diphosphate + anthranilate. It participates in amino-acid biosynthesis; L-tryptophan biosynthesis; L-tryptophan from chorismate: step 2/5. Catalyzes the transfer of the phosphoribosyl group of 5-phosphorylribose-1-pyrophosphate (PRPP) to anthranilate to yield N-(5'-phosphoribosyl)-anthranilate (PRA). The chain is Anthranilate phosphoribosyltransferase from Yersinia pestis bv. Antiqua (strain Antiqua).